A 173-amino-acid chain; its full sequence is Superoxide dismutase [Cu-Zn] (173 aa).

The signal sequence occupies residues 1-22 (MNKAKTLLFTALAFGLSHQALA). Cu cation contacts are provided by histidine 67, histidine 69, and histidine 92. Cysteine 74 and cysteine 169 are disulfide-bonded. Residues histidine 92, histidine 101, histidine 110, and aspartate 113 each contribute to the Zn(2+) site. Residue histidine 147 coordinates Cu cation.

Belongs to the Cu-Zn superoxide dismutase family. In terms of assembly, homodimer. The cofactor is Cu cation. Zn(2+) serves as cofactor.

It localises to the periplasm. The enzyme catalyses 2 superoxide + 2 H(+) = H2O2 + O2. Its function is as follows. Destroys radicals which are normally produced within the cells and which are toxic to biological systems. This is Superoxide dismutase [Cu-Zn] (sodC) from Photobacterium leiognathi.